The sequence spans 130 residues: Small ribosomal subunit protein uS9 (130 aa).

Belongs to the universal ribosomal protein uS9 family.

The sequence is that of Small ribosomal subunit protein uS9 from Vibrio campbellii (strain ATCC BAA-1116).